Reading from the N-terminus, the 440-residue chain is Tol-Pal system protein TolB (440 aa).

Residues M1 to A28 form the signal peptide. The tract at residues R417–Q440 is disordered.

This sequence belongs to the TolB family. The Tol-Pal system is composed of five core proteins: the inner membrane proteins TolA, TolQ and TolR, the periplasmic protein TolB and the outer membrane protein Pal. They form a network linking the inner and outer membranes and the peptidoglycan layer.

The protein localises to the periplasm. Its function is as follows. Part of the Tol-Pal system, which plays a role in outer membrane invagination during cell division and is important for maintaining outer membrane integrity. This Bartonella quintana (strain Toulouse) (Rochalimaea quintana) protein is Tol-Pal system protein TolB.